The chain runs to 962 residues: Activity-dependent neuroprotective protein 2a (962 aa).

The segment at 75 to 98 (LCCSLCWYSSRSVPTFRSHIHRCH) adopts a C2H2-type 1 zinc-finger fold. A C2H2-type 2; degenerate zinc finger spans residues 108-130 (LMCPYCPFVSSPKVTEQHIQFFH). The segment at 165 to 188 (YTCATCGYHDSLLYVMKKHVLVNH) adopts a C2H2-type 3; degenerate zinc-finger fold. The C2H2-type 4 zinc finger occupies 219–244 (YHCKLCKLPAETIEHLLYHILSSEKH). The C2H2-type 5; degenerate zinc finger occupies 527 to 547 (VKCLRCKILLTEQGIFQHLLH). C2H2-type zinc fingers lie at residues 549–572 (LKCL…KKEH) and 650–673 (NACP…QTKH). A C2H2-type 8; degenerate zinc finger spans residues 688–712 (YKCIYCFGVYTEKSTPKTISIHVQR). Positions 753 to 781 (QGAPEFPKPKKEAVTPRNRRRNTKASKTG) are disordered. The segment at residues 795-854 (PMGMERTSFEDRKDFLSQYFHRKPYVTKTEIELLASRLWINKADVKAHFNSKLTKCLKAI) is a DNA-binding region (homeobox).

The protein localises to the nucleus. Functionally, may be involved in transcriptional regulation. Required for progression through late erythroid differentiation. May be involved in vasculogenesis. This is Activity-dependent neuroprotective protein 2a from Danio rerio (Zebrafish).